Reading from the N-terminus, the 660-residue chain is Poly [ADP-ribose] polymerase 2-A (660 aa).

Residues 2 to 36 (SARLRVEELRAELQRRGLDASGNKPVLVRRLDAAI) form the SAP 1 domain. The disordered stretch occupies residues 40 to 92 (EEEEAAVSAAAKEEADAGGVVDGEGNGEDKRKRKRRGDGEDVDNSESDAAKLE). The Nuclear localization signal signature appears at 69 to 75 (KRKRKRR). The region spanning 91–125 (LEGMSYRELQALAKSRGLAANGSKKEVIERLLCAP) is the SAP 2 domain. Residues 179-281 (TYHVLQVWFL…KSFECYARKY (103 aa)) enclose the WGR domain. The 119-residue stretch at 308–426 (ETKLETRIAS…EIEIATKLLE (119 aa)) folds into the PARP alpha-helical domain. The region spanning 434–660 (DPLYARYKQL…LHVSFNFKKR (227 aa)) is the PARP catalytic domain.

Belongs to the ARTD/PARP family.

It is found in the nucleus. The catalysed reaction is NAD(+) + (ADP-D-ribosyl)n-acceptor = nicotinamide + (ADP-D-ribosyl)n+1-acceptor + H(+).. The enzyme catalyses L-aspartyl-[protein] + NAD(+) = 4-O-(ADP-D-ribosyl)-L-aspartyl-[protein] + nicotinamide. It catalyses the reaction L-glutamyl-[protein] + NAD(+) = 5-O-(ADP-D-ribosyl)-L-glutamyl-[protein] + nicotinamide. Involved in the base excision repair (BER) pathway, by catalyzing the poly(ADP-ribosyl)ation of a limited number of acceptor proteins involved in chromatin architecture and in DNA metabolism. This modification follows DNA damages and appears as an obligatory step in a detection/signaling pathway leading to the reparation of DNA strand breaks. The sequence is that of Poly [ADP-ribose] polymerase 2-A (PARP2-A) from Oryza sativa subsp. japonica (Rice).